A 529-amino-acid chain; its full sequence is Bifunctional purine biosynthesis protein PurH (529 aa).

Residues 1–148 enclose the MGS-like domain; the sequence is MQQRRPIRRA…KNHKDVAIVV (148 aa).

The protein belongs to the PurH family.

It carries out the reaction (6R)-10-formyltetrahydrofolate + 5-amino-1-(5-phospho-beta-D-ribosyl)imidazole-4-carboxamide = 5-formamido-1-(5-phospho-D-ribosyl)imidazole-4-carboxamide + (6S)-5,6,7,8-tetrahydrofolate. The catalysed reaction is IMP + H2O = 5-formamido-1-(5-phospho-D-ribosyl)imidazole-4-carboxamide. The protein operates within purine metabolism; IMP biosynthesis via de novo pathway; 5-formamido-1-(5-phospho-D-ribosyl)imidazole-4-carboxamide from 5-amino-1-(5-phospho-D-ribosyl)imidazole-4-carboxamide (10-formyl THF route): step 1/1. It participates in purine metabolism; IMP biosynthesis via de novo pathway; IMP from 5-formamido-1-(5-phospho-D-ribosyl)imidazole-4-carboxamide: step 1/1. This Yersinia pseudotuberculosis serotype O:1b (strain IP 31758) protein is Bifunctional purine biosynthesis protein PurH.